The following is a 398-amino-acid chain: Argininosuccinate synthase (398 aa).

Position 8–16 (8–16 (AYSGGLDTS)) interacts with ATP. Y87 provides a ligand contact to L-citrulline. ATP is bound at residue G117. Residues T119, N123, and D124 each contribute to the L-aspartate site. Residue N123 participates in L-citrulline binding. 4 residues coordinate L-citrulline: R127, S175, E260, and Y272.

The protein belongs to the argininosuccinate synthase family. Type 1 subfamily. In terms of assembly, homotetramer.

The protein localises to the cytoplasm. It catalyses the reaction L-citrulline + L-aspartate + ATP = 2-(N(omega)-L-arginino)succinate + AMP + diphosphate + H(+). Its pathway is amino-acid biosynthesis; L-arginine biosynthesis; L-arginine from L-ornithine and carbamoyl phosphate: step 2/3. The protein is Argininosuccinate synthase of Mycobacterium ulcerans (strain Agy99).